Consider the following 201-residue polypeptide: MTARELSIAGAWEITPVLRTDSRGLFFEWFTDAGFTEFAGHQFDMRQANCSVSARGVLRGVHFAQVPPSQAKYVTCVRGAVFDVVVDIRVGSPTFGQWDAVLLDDKDRRSIYISEGLGHAFLALDDDSTVMYLCSAPYAPQREHTVRPTDFGIEWPEVPELILSDRDAQAPSLAEAQAAGVLPTWADCQAFVETLRRNLVS.

Residues arginine 23, glutamate 28, 47–49 (QAN), and arginine 59 each bind substrate. Histidine 62 functions as the Proton acceptor in the catalytic mechanism. Substrate is bound by residues lysine 72 and histidine 119. Tyrosine 132 acts as the Proton donor in catalysis. Residues glutamate 143 and arginine 166 each contribute to the substrate site.

It belongs to the dTDP-4-dehydrorhamnose 3,5-epimerase family. In terms of assembly, homodimer.

It carries out the reaction dTDP-4-dehydro-6-deoxy-alpha-D-glucose = dTDP-4-dehydro-beta-L-rhamnose. It participates in carbohydrate biosynthesis; dTDP-L-rhamnose biosynthesis. In terms of biological role, catalyzes the epimerization of the C3' and C5'positions of dTDP-6-deoxy-D-xylo-4-hexulose, forming dTDP-6-deoxy-L-lyxo-4-hexulose. Involved in the biosynthesis of the dTDP-L-rhamnose which is a component of the critical linker, D-N-acetylglucosamine-L-rhamnose disaccharide, which connects the galactan region of arabinogalactan to peptidoglycan via a phosphodiester linkage. The polypeptide is dTDP-4-dehydrorhamnose 3,5-epimerase (rmlC) (Mycolicibacterium smegmatis (strain ATCC 700084 / mc(2)155) (Mycobacterium smegmatis)).